A 78-amino-acid polypeptide reads, in one-letter code: Small ribosomal subunit protein bS16c (78 aa).

Belongs to the bacterial ribosomal protein bS16 family.

Its subcellular location is the plastid. The protein localises to the chloroplast. The polypeptide is Small ribosomal subunit protein bS16c (Daucus carota (Wild carrot)).